Consider the following 361-residue polypeptide: Single-stranded DNA-binding protein 2 (361 aa).

Lysine 6 bears the N6-acetyllysine mark. Residues alanine 18–lysine 50 form the LisH domain. Disordered regions lie at residues glycine 147–methionine 171 and glycine 194–valine 361. Residues glycine 204–arginine 219 are compositionally biased toward gly residues. Positions threonine 225 to serine 236 are enriched in polar residues. Over residues glycine 246–proline 256 the composition is skewed to pro residues. The segment covering glycine 289 to glycine 299 has biased composition (gly residues). Polar residues predominate over residues isoleucine 317–glycine 332. Serine 321 is modified (phosphoserine). Threonine 333 bears the Phosphothreonine mark. Residues asparagine 346–valine 361 are compositionally biased toward polar residues.

In terms of tissue distribution, ubiquitous.

It is found in the nucleus. The polypeptide is Single-stranded DNA-binding protein 2 (SSBP2) (Homo sapiens (Human)).